A 242-amino-acid chain; its full sequence is MNQVARGAGAKRYADAKAALAGVVADGQTLAVGGFGLCGIPEALIAALRDSAVSGLTVISNNAGVDGFGLGQLLATRQIRKMISSYVGENKEFERQYLAGELELEFNPQGTLAERLRAGGAGIPAFYTATGYGTIVAYGKETREFDGKHYVLETALQADVALIKAWRADTAGNLVFRKTARNFNPACAMAGRVCIAEVEEIVELGAIDPDQVHLPGIYIDRLVLNATPEKRIEQRTVRQGDK.

33–39 (GGFGLCG) contacts CoA.

The protein belongs to the 3-oxoacid CoA-transferase subunit A family. Heterodimer of a subunit A and a subunit B.

It catalyses the reaction a 3-oxo acid + succinyl-CoA = a 3-oxoacyl-CoA + succinate. It functions in the pathway bacterial outer membrane biogenesis; lipopolysaccharide biosynthesis. The protein is Succinyl-CoA:3-ketoacid coenzyme A transferase subunit A (lpsI) of Xanthomonas campestris pv. campestris (strain ATCC 33913 / DSM 3586 / NCPPB 528 / LMG 568 / P 25).